The chain runs to 663 residues: UvrABC system protein B (663 aa).

The 241-residue stretch at 31–271 (DNIEGGEKAQ…EQSISKIQAE (241 aa)) folds into the Helicase ATP-binding domain. Residue 44 to 51 (GATGTGKT) coordinates ATP. The Beta-hairpin motif lies at 97–120 (YYDYYQPEAYVPSSDTYIEKDSSV). The Helicase C-terminal domain occupies 435-601 (QMDDLLGEIN…TIKKDIRDLI (167 aa)). A UVR domain is found at 627–662 (QEAIKQLQKNMQEAAELLDFELAAQLRDLILELKAM).

Belongs to the UvrB family. In terms of assembly, forms a heterotetramer with UvrA during the search for lesions. Interacts with UvrC in an incision complex.

The protein resides in the cytoplasm. Its function is as follows. The UvrABC repair system catalyzes the recognition and processing of DNA lesions. A damage recognition complex composed of 2 UvrA and 2 UvrB subunits scans DNA for abnormalities. Upon binding of the UvrA(2)B(2) complex to a putative damaged site, the DNA wraps around one UvrB monomer. DNA wrap is dependent on ATP binding by UvrB and probably causes local melting of the DNA helix, facilitating insertion of UvrB beta-hairpin between the DNA strands. Then UvrB probes one DNA strand for the presence of a lesion. If a lesion is found the UvrA subunits dissociate and the UvrB-DNA preincision complex is formed. This complex is subsequently bound by UvrC and the second UvrB is released. If no lesion is found, the DNA wraps around the other UvrB subunit that will check the other stand for damage. The polypeptide is UvrABC system protein B (Streptococcus equi subsp. equi (strain 4047)).